Consider the following 791-residue polypeptide: Phenylalanine--tRNA ligase beta subunit (791 aa).

The tRNA-binding domain occupies 39–148 (AADFSGVVVA…ADAPVGADIR (110 aa)). The B5 domain maps to 401–476 (PLRAPVRLRE…RVYGYDAIPR (76 aa)). The Mg(2+) site is built by aspartate 454, aspartate 460, glutamate 463, and glutamate 464. The FDX-ACB domain maps to 697–790 (SRFPLVRRDL…LAADFGAKLR (94 aa)).

This sequence belongs to the phenylalanyl-tRNA synthetase beta subunit family. Type 1 subfamily. Tetramer of two alpha and two beta subunits. It depends on Mg(2+) as a cofactor.

It localises to the cytoplasm. It carries out the reaction tRNA(Phe) + L-phenylalanine + ATP = L-phenylalanyl-tRNA(Phe) + AMP + diphosphate + H(+). The sequence is that of Phenylalanine--tRNA ligase beta subunit from Methylococcus capsulatus (strain ATCC 33009 / NCIMB 11132 / Bath).